The chain runs to 321 residues: Ribosomal RNA small subunit methyltransferase H (321 aa).

Residues glycine 29–histidine 31, aspartate 48, tyrosine 76, aspartate 97, and glutamine 104 contribute to the S-adenosyl-L-methionine site. The interval leucine 277 to serine 321 is disordered.

The protein belongs to the methyltransferase superfamily. RsmH family.

It is found in the cytoplasm. It catalyses the reaction cytidine(1402) in 16S rRNA + S-adenosyl-L-methionine = N(4)-methylcytidine(1402) in 16S rRNA + S-adenosyl-L-homocysteine + H(+). Specifically methylates the N4 position of cytidine in position 1402 (C1402) of 16S rRNA. This chain is Ribosomal RNA small subunit methyltransferase H, found in Frankia casuarinae (strain DSM 45818 / CECT 9043 / HFP020203 / CcI3).